The following is a 174-amino-acid chain: Mediator of RNA polymerase II transcription subunit 30 (174 aa).

Residues 113-166 adopt a coiled-coil conformation; it reads VEDDSSKLEDRMANQLRAASEERREVLEVNKKLKQKNQQLKMIMDQLRNLIWEI.

It belongs to the Mediator complex subunit 30 family. Component of the Mediator complex.

It localises to the nucleus. In terms of biological role, component of the Mediator complex, a coactivator involved in the regulated transcription of nearly all RNA polymerase II-dependent genes. Mediator functions as a bridge to convey information from gene-specific regulatory proteins to the basal RNA polymerase II transcription machinery. Mediator is recruited to promoters by direct interactions with regulatory proteins and serves as a scaffold for the assembly of a functional preinitiation complex with RNA polymerase II and the general transcription factors. This Danio rerio (Zebrafish) protein is Mediator of RNA polymerase II transcription subunit 30 (med30).